The following is a 372-amino-acid chain: Anhydro-N-acetylmuramic acid kinase (372 aa).

Residue 13 to 20 (GTSMDGID) participates in ATP binding.

The protein belongs to the anhydro-N-acetylmuramic acid kinase family.

It catalyses the reaction 1,6-anhydro-N-acetyl-beta-muramate + ATP + H2O = N-acetyl-D-muramate 6-phosphate + ADP + H(+). It functions in the pathway amino-sugar metabolism; 1,6-anhydro-N-acetylmuramate degradation. The protein operates within cell wall biogenesis; peptidoglycan recycling. Its function is as follows. Catalyzes the specific phosphorylation of 1,6-anhydro-N-acetylmuramic acid (anhMurNAc) with the simultaneous cleavage of the 1,6-anhydro ring, generating MurNAc-6-P. Is required for the utilization of anhMurNAc either imported from the medium or derived from its own cell wall murein, and thus plays a role in cell wall recycling. This Rhizobium johnstonii (strain DSM 114642 / LMG 32736 / 3841) (Rhizobium leguminosarum bv. viciae) protein is Anhydro-N-acetylmuramic acid kinase.